Consider the following 35-residue polypeptide: Kappa-theraphotoxin-Tb1a (35 aa).

3 disulfide bridges follow: Cys3–Cys18, Cys10–Cys23, and Cys17–Cys30.

Belongs to the neurotoxin 10 (Hwtx-1) family. 59 (Tltx) subfamily. Monomer. Expressed by the venom gland.

The protein resides in the secreted. Its function is as follows. Blocks Kv4.2/KCND2 voltage-gated potassium channels (IC(50) is 193.0 nM) by shifting the voltage-dependence of channel activation to more depolarized potentials. The toxin is thought to bind to the S3-S4 linker region of the voltage sensor domain. The chain is Kappa-theraphotoxin-Tb1a from Theraphosa blondi (Goliath birdeating spider).